The sequence spans 352 residues: tRNA N6-adenosine threonylcarbamoyltransferase (352 aa).

Residues His115 and His119 each coordinate Fe cation. Residues 138–142 (LVSGG), Asp171, Gly184, and Asn277 each bind substrate. A Fe cation-binding site is contributed by Asp305.

It belongs to the KAE1 / TsaD family. It depends on Fe(2+) as a cofactor.

It is found in the cytoplasm. It carries out the reaction L-threonylcarbamoyladenylate + adenosine(37) in tRNA = N(6)-L-threonylcarbamoyladenosine(37) in tRNA + AMP + H(+). Functionally, required for the formation of a threonylcarbamoyl group on adenosine at position 37 (t(6)A37) in tRNAs that read codons beginning with adenine. Is involved in the transfer of the threonylcarbamoyl moiety of threonylcarbamoyl-AMP (TC-AMP) to the N6 group of A37, together with TsaE and TsaB. TsaD likely plays a direct catalytic role in this reaction. The polypeptide is tRNA N6-adenosine threonylcarbamoyltransferase (Variovorax paradoxus (strain S110)).